The following is a 1159-amino-acid chain: Cation channel sperm-associated auxiliary subunit gamma (1159 aa).

The first 35 residues, 1–35 (MCGPAMFPAGPRWPRVRVLQVLWALLAVLLASRRL), serve as a signal peptide directing secretion. Topologically, residues 36 to 1065 (WAIKDFEECT…IHGLPLSPKR (1030 aa)) are extracellular. 2 cysteine pairs are disulfide-bonded: C44–C105 and C159–C165. N102 is a glycosylation site (N-linked (GlcNAc...) asparagine). N177 carries an N-linked (GlcNAc...) asparagine glycan. C288 and C343 are oxidised to a cystine. An N-linked (GlcNAc...) asparagine glycan is attached at N355. A disulfide bridge links C394 with C402. Residues N426 and N574 are each glycosylated (N-linked (GlcNAc...) asparagine). 5 disulfides stabilise this stretch: C638/C860, C806/C834, C882/C1046, C909/C918, and C1010/C1016. Residues 1066 to 1087 (ALFILMVSLSVFVGLVIFYIAF) form a helical membrane-spanning segment. The Cytoplasmic portion of the chain corresponds to 1088–1159 (CLLWPLVVKG…KEAVERQLMT (72 aa)). The tract at residues 1138 to 1159 (FSSRMTEDKAEPKEAVERQLMT) is disordered. Residues 1142–1159 (MTEDKAEPKEAVERQLMT) show a composition bias toward basic and acidic residues.

This sequence belongs to the CATSPERG family. In terms of assembly, component of the CatSper complex or CatSpermasome composed of the core pore-forming members CATSPER1, CATSPER2, CATSPER3 and CATSPER4 as well as auxiliary members CATSPERB, CATSPERG, CATSPERD, CATSPERE, CATSPERZ, SCLO6C1, TMEM249, TMEM262 and EFCAB9. HSPA1 may be an additional auxiliary complex member. The core complex members CATSPER1, CATSPER2, CATSPER3 and CATSPER4 form a heterotetrameric channel. The auxiliary CATSPERB, CATSPERG, CATSPERD and CATSPERE subunits form a pavilion-like structure over the pore which stabilizes the complex through interactions with CATSPER4, CATSPER3, CATSPER1 and CATSPER2 respectively. TMEM262/CATSPERH interacts with CATSPERB, further stabilizing the complex. C2CD6/CATSPERT interacts at least with CATSPERD and is required for targeting the CatSper complex in the flagellar membrane.

It localises to the cell projection. The protein resides in the cilium. The protein localises to the flagellum membrane. Its function is as follows. Auxiliary component of the CatSper complex, a complex involved in sperm cell hyperactivation. Sperm cell hyperactivation is needed for sperm motility which is essential late in the preparation of sperm for fertilization. The chain is Cation channel sperm-associated auxiliary subunit gamma from Macaca fascicularis (Crab-eating macaque).